Consider the following 249-residue polypeptide: Polyhedrin (249 aa).

This sequence belongs to the polyhedrin family.

Its function is as follows. Major component of the virus occlusion bodies, which are large proteinaceous structures (polyhedra), that protect the virus from the outside environment for extended periods until they are ingested by insect larvae. The sequence is that of Polyhedrin (PH) from Lepidoptera (butterflies and moths).